A 412-amino-acid chain; its full sequence is Peptidase T (412 aa).

Histidine 84 contributes to the Zn(2+) binding site. The active site involves aspartate 86. Aspartate 146 lines the Zn(2+) pocket. The active-site Proton acceptor is the glutamate 179. The Zn(2+) site is built by glutamate 180, aspartate 202, and histidine 385.

Belongs to the peptidase M20B family. Zn(2+) is required as a cofactor.

The protein resides in the cytoplasm. The catalysed reaction is Release of the N-terminal residue from a tripeptide.. Its function is as follows. Cleaves the N-terminal amino acid of tripeptides. The chain is Peptidase T from Pasteurella multocida (strain Pm70).